Reading from the N-terminus, the 288-residue chain is Probable prolyl 4-hydroxylase 9 (288 aa).

Topologically, residues 1–12 (MKSRLKSYRRKK) are cytoplasmic. Residues 13–33 (LGLATVIVFCSLCFLFGFYGS) form a helical; Signal-anchor for type II membrane protein membrane-spanning segment. Residues 34 to 288 (TLLSQNVPRV…KWIRDQDQEE (255 aa)) lie on the Lumenal side of the membrane. A Fe2OG dioxygenase domain is found at 164 to 283 (HGESFNILRY…KWVATKWIRD (120 aa)). Positions 182 and 184 each coordinate Fe cation. Residues N221 and N255 are each glycosylated (N-linked (GlcNAc...) asparagine). H264 lines the Fe cation pocket. K274 is a 2-oxoglutarate binding site.

It belongs to the P4HA family. The cofactor is Fe(2+). Requires L-ascorbate as cofactor.

The protein localises to the endoplasmic reticulum membrane. It localises to the golgi apparatus. The catalysed reaction is L-prolyl-[collagen] + 2-oxoglutarate + O2 = trans-4-hydroxy-L-prolyl-[collagen] + succinate + CO2. Its function is as follows. Catalyzes the post-translational formation of 4-hydroxyproline in -Xaa-Pro-Gly- sequences in proline-rich peptide sequences of plant glycoproteins and other proteins. Hydroxyprolines are important constituent of many plant cell wall glycoproteins such as extensins, hydroxyproline-rich glycoproteins, lectins and arabinogalactan proteins. The polypeptide is Probable prolyl 4-hydroxylase 9 (Arabidopsis thaliana (Mouse-ear cress)).